The primary structure comprises 296 residues: 4-hydroxy-tetrahydrodipicolinate synthase (296 aa).

Thr-49 lines the pyruvate pocket. Residue Tyr-137 is the Proton donor/acceptor of the active site. Catalysis depends on Lys-166, which acts as the Schiff-base intermediate with substrate. Ile-208 serves as a coordination point for pyruvate.

This sequence belongs to the DapA family. Homotetramer; dimer of dimers.

It is found in the cytoplasm. The catalysed reaction is L-aspartate 4-semialdehyde + pyruvate = (2S,4S)-4-hydroxy-2,3,4,5-tetrahydrodipicolinate + H2O + H(+). It participates in amino-acid biosynthesis; L-lysine biosynthesis via DAP pathway; (S)-tetrahydrodipicolinate from L-aspartate: step 3/4. Its function is as follows. Catalyzes the condensation of (S)-aspartate-beta-semialdehyde [(S)-ASA] and pyruvate to 4-hydroxy-tetrahydrodipicolinate (HTPA). This chain is 4-hydroxy-tetrahydrodipicolinate synthase, found in Chlorobaculum parvum (strain DSM 263 / NCIMB 8327) (Chlorobium vibrioforme subsp. thiosulfatophilum).